The primary structure comprises 339 residues: tRNA N6-adenosine threonylcarbamoyltransferase (339 aa).

Fe cation-binding residues include histidine 114 and histidine 118. Substrate contacts are provided by residues valine 137–glycine 141, aspartate 170, glycine 183, aspartate 187, and asparagine 277. Aspartate 305 serves as a coordination point for Fe cation.

It belongs to the KAE1 / TsaD family. Fe(2+) is required as a cofactor.

The protein localises to the cytoplasm. The enzyme catalyses L-threonylcarbamoyladenylate + adenosine(37) in tRNA = N(6)-L-threonylcarbamoyladenosine(37) in tRNA + AMP + H(+). Its function is as follows. Required for the formation of a threonylcarbamoyl group on adenosine at position 37 (t(6)A37) in tRNAs that read codons beginning with adenine. Is involved in the transfer of the threonylcarbamoyl moiety of threonylcarbamoyl-AMP (TC-AMP) to the N6 group of A37, together with TsaE and TsaB. TsaD likely plays a direct catalytic role in this reaction. The sequence is that of tRNA N6-adenosine threonylcarbamoyltransferase from Clostridium perfringens (strain ATCC 13124 / DSM 756 / JCM 1290 / NCIMB 6125 / NCTC 8237 / Type A).